The following is a 133-amino-acid chain: ATP synthase epsilon chain, chloroplastic (133 aa).

It belongs to the ATPase epsilon chain family. As to quaternary structure, F-type ATPases have 2 components, CF(1) - the catalytic core - and CF(0) - the membrane proton channel. CF(1) has five subunits: alpha(3), beta(3), gamma(1), delta(1), epsilon(1). CF(0) has three main subunits: a, b and c.

The protein localises to the plastid. It is found in the chloroplast thylakoid membrane. Its function is as follows. Produces ATP from ADP in the presence of a proton gradient across the membrane. The sequence is that of ATP synthase epsilon chain, chloroplastic from Atropa belladonna (Belladonna).